Here is a 3955-residue protein sequence, read N- to C-terminus: Nonribosomal peptide synthetase fmqA (3955 aa).

The adenylation 1 stretch occupies residues 293–691 (SYSELETLSL…AQACCTIRNV (399 aa)). The Carrier 1 domain occupies 806–879 (THKETLIHQL…DLARLTDVVN (74 aa)). Ser-840 carries the O-(pantetheine 4'-phosphoryl)serine modification. Residues 916–1187 (QDIYPCTPLQ…IATVPLRVRL (272 aa)) form a condensation 1 region. The segment at 1371–1766 (TYAELGELSD…DEVEKHVYQC (396 aa)) is adenylation 2. One can recognise a Carrier 2 domain in the interval 1880–1956 (EPTSVAEREM…KIMSHESSLS (77 aa)). Ser-1917 carries the post-translational modification O-(pantetheine 4'-phosphoryl)serine. The interval 1970–2261 (FALSPIQQMF…FTTMWPVVAE (292 aa)) is epimerase. Residues 2438 to 2724 (EDIYPCSPSQ…FNPLPCRVHL (287 aa)) are condensation 2. The adenylation 3 stretch occupies residues 2906 to 3299 (TYGQLDELSS…GEVEANVQHC (394 aa)). The Carrier 3 domain occupies 3422-3498 (APSTEEEKKL…DLAKVAVPKS (77 aa)). Residue Ser-3459 is modified to O-(pantetheine 4'-phosphoryl)serine. Residues 3541–3805 (PGTQAQQFFI…CLNFIPLRVM (265 aa)) are condensation 3.

Belongs to the NRP synthetase family. As to quaternary structure, interacts with the mitogen-activated protein kinase mpkA.

The protein resides in the cytoplasmic vesicle. The protein operates within alkaloid biosynthesis. Functionally, nonribosomal peptide synthetase; part of the gene cluster that mediates the biosynthesis of the antitumor fumiquinazolines that confer a dual-usage capability to defend against phagocytes in the environment and animal hosts. The simplest member is fumiquinazoline F (FQF) with a 6-6-6 tricyclic core derived from anthranilic acid (Ant), tryptophan (Trp), and alanine (Ala). The trimodular NRPS fmqA is responsible for FQF formation. Modules 1, 2 and 3 of fmqA are predicted to activate and load Ant, Trp and Ala, respectively, providing for the assembly of an Ant-Trp-Ala-S-enzyme intermediate that would undergo double cyclization for chain release and generation of the tricyclic 6-6-6 product fumiquinazoline F. The presence of an E domain predicted for module 2 of fmqA is consistent with epimerization of L-Trp to D-Trp during assembly to generate the R-stereocenter at C14 of FQF. The FAD-dependent monooxygenase fmqB and the monomodular NRPS fmqC then maturate FQF to FQA. FmqB oxidizes the 2',3'-double bond of the indole side chain of FQF, and fmqC activates L-Ala as the adenylate, installs it as the pantetheinyl thioester on its carrier protein domain, and acylates the oxidized indole for subsequent intramolecular cyclization to create the 6-5-5-imidazolindolone of FQA. The FAD-linked oxidoreductase fmqD introduces a third layer of scaffold complexity by converting FQA to the spirohemiaminal FQC, presumably by catalyzing the formation of a transient imine within the pyrazinone ring. FQC subsequently converts nonenzymatically to the known cyclic aminal FQD. The chain is Nonribosomal peptide synthetase fmqA from Aspergillus fumigatus (strain ATCC MYA-4609 / CBS 101355 / FGSC A1100 / Af293) (Neosartorya fumigata).